The chain runs to 107 residues: MEDILKLLFETIEERKKNPLSESYTNYLFSKGEDKILKKIGEECTEVIIASKNNDKEEIVKEMVDVFYHCFVLLAEKNIPLEDVMQEVKERNGKLSRVGDRREIDTL.

The protein belongs to the PRA-PH family.

It localises to the cytoplasm. The catalysed reaction is 1-(5-phospho-beta-D-ribosyl)-ATP + H2O = 1-(5-phospho-beta-D-ribosyl)-5'-AMP + diphosphate + H(+). Its pathway is amino-acid biosynthesis; L-histidine biosynthesis; L-histidine from 5-phospho-alpha-D-ribose 1-diphosphate: step 2/9. The protein is Phosphoribosyl-ATP pyrophosphatase of Bacillus mycoides (strain KBAB4) (Bacillus weihenstephanensis).